A 502-amino-acid polypeptide reads, in one-letter code: 2,3-bisphosphoglycerate-independent phosphoglycerate mutase (502 aa).

Mn(2+)-binding residues include D12 and S62. S62 functions as the Phosphoserine intermediate in the catalytic mechanism. Substrate is bound by residues H123, 152-153 (RD), R183, R189, 255-258 (RPDR), and K329. Mn(2+) contacts are provided by D394, H398, D435, H436, and H453.

It belongs to the BPG-independent phosphoglycerate mutase family. Monomer. Mn(2+) is required as a cofactor.

The enzyme catalyses (2R)-2-phosphoglycerate = (2R)-3-phosphoglycerate. It participates in carbohydrate degradation; glycolysis; pyruvate from D-glyceraldehyde 3-phosphate: step 3/5. In terms of biological role, catalyzes the interconversion of 2-phosphoglycerate and 3-phosphoglycerate. The chain is 2,3-bisphosphoglycerate-independent phosphoglycerate mutase from Malacoplasma penetrans (strain HF-2) (Mycoplasma penetrans).